The sequence spans 538 residues: Exo-alpha-bergamotene synthase (538 aa).

Positions 291, 295, 435, 439, and 443 each coordinate Mg(2+). Residues 291–295 carry the DDXXD motif motif; it reads DDIYD.

The protein belongs to the terpene synthase family. The cofactor is Mg(2+). It depends on Mn(2+) as a cofactor.

The catalysed reaction is (2E,6E)-farnesyl diphosphate = (1S,5S,6R)-alpha-bergamotene + diphosphate. In terms of biological role, catalyzes a mixture of sesquiterpenoids from (2E,6E)-farnesyl diphosphate. Catalyzes the formation of exo-alpha-bergamotene, as well as (E)-nerolidol, (Z)-alpha-bisabolene, (E)-beta-farnesene and beta-sesquiphellandrene. Also has activity towards geranyl diphosphate, but to a much lesser extent. This is Exo-alpha-bergamotene synthase from Lavandula angustifolia (Lavender).